A 480-amino-acid chain; its full sequence is Probable cobyric acid synthase (480 aa).

In terms of domain architecture, GATase cobBQ-type spans 246-431; it reads PVRIAVIRLP…MHGLFLNPSA (186 aa). Cys-325 functions as the Nucleophile in the catalytic mechanism. The active site involves His-423.

The protein belongs to the CobB/CobQ family. CobQ subfamily.

The protein operates within cofactor biosynthesis; adenosylcobalamin biosynthesis. Functionally, catalyzes amidations at positions B, D, E, and G on adenosylcobyrinic A,C-diamide. NH(2) groups are provided by glutamine, and one molecule of ATP is hydrogenolyzed for each amidation. In Methanoregula boonei (strain DSM 21154 / JCM 14090 / 6A8), this protein is Probable cobyric acid synthase.